The sequence spans 483 residues: Glutamyl-tRNA(Gln) amidotransferase subunit A (483 aa).

Catalysis depends on charge relay system residues K77 and S152. Catalysis depends on S176, which acts as the Acyl-ester intermediate.

This sequence belongs to the amidase family. GatA subfamily. As to quaternary structure, heterotrimer of A, B and C subunits.

It carries out the reaction L-glutamyl-tRNA(Gln) + L-glutamine + ATP + H2O = L-glutaminyl-tRNA(Gln) + L-glutamate + ADP + phosphate + H(+). Its function is as follows. Allows the formation of correctly charged Gln-tRNA(Gln) through the transamidation of misacylated Glu-tRNA(Gln) in organisms which lack glutaminyl-tRNA synthetase. The reaction takes place in the presence of glutamine and ATP through an activated gamma-phospho-Glu-tRNA(Gln). The protein is Glutamyl-tRNA(Gln) amidotransferase subunit A of Listeria monocytogenes serotype 4b (strain F2365).